Reading from the N-terminus, the 184-residue chain is Protein Iojap-related, mitochondrial (184 aa).

The transit peptide at 1-39 (MLTTLRSRCSSLLLNQSWKLAPNRIFASSPSFSSSAGIS) directs the protein to the mitochondrion.

The protein belongs to the Iojap/RsfS family.

It is found in the mitochondrion. In terms of biological role, may be a ribosome silencing factor involved in organelle biogenesis and required for germination. The sequence is that of Protein Iojap-related, mitochondrial from Arabidopsis thaliana (Mouse-ear cress).